The following is a 521-amino-acid chain: Feruloyl esterase B (521 aa).

The signal sequence occupies residues 1–17; that stretch reads MKVASLLSLALPGAALA. Intrachain disulfides connect Cys26–Cys72 and Cys61–Cys111. N-linked (GlcNAc...) asparagine glycosylation is found at Asn37, Asn51, Asn77, Asn95, Asn144, and Asn177. 3 disulfide bridges follow: Cys184-Cys438, Cys253-Cys270, and Cys279-Cys288. Residue Ser185 is the Acyl-ester intermediate of the active site. Ca(2+)-binding residues include Asp254, Asp257, Ala259, Asp261, and Ile263. N-linked (GlcNAc...) asparagine glycosylation is found at Asn284, Asn347, Asn352, and Asn378. Residues Asp397 and His437 each act as charge relay system in the active site. 2 N-linked (GlcNAc...) asparagine glycosylation sites follow: Asn488 and Asn511. Cys498 and Cys520 are oxidised to a cystine.

Belongs to the tannase family. In terms of assembly, homodimer. Post-translationally, glycosylated.

The protein localises to the secreted. The enzyme catalyses feruloyl-polysaccharide + H2O = ferulate + polysaccharide.. Inhibited by the specific serine esterase inhibitor AEBSF. Involved in degradation of plant cell walls. Hydrolyzes of the feruloyl-arabinose ester bond in arabinoxylans as well as the feruloyl-galactose and feruloyl-arabinose ester bonds in pectin. This is Feruloyl esterase B (faeB) from Aspergillus niger.